The chain runs to 431 residues: Mitochondrial inner membrane protein OXA1-like (431 aa).

Residues 1–22 (MATCLRGITKRVNLLQRRVYPS) constitute a mitochondrion transit peptide. 5 consecutive transmembrane segments (helical) span residues 119–139 (VVPA…PVAA), 155–175 (WWAS…PILL), 227–247 (FTPL…FFAI), 269–289 (TTTD…LIMV), and 312–332 (IIAF…FCYW). Residues 362–414 (NSSTRQPSPSSPLPFSFAEPKDQSVVAQEKPPMSSESSSSVPDRRISRSSVLN) form a disordered region. A compositionally biased stretch (low complexity) spans 392 to 402 (PPMSSESSSSV).

This sequence belongs to the OXA1/ALB3/YidC (TC 2.A.9.2) family.

It localises to the mitochondrion inner membrane. In terms of biological role, probably required for the insertion of integral membrane proteins into the mitochondrial inner membrane. May participate in the activity and assembly of cytochrome oxidase. This chain is Mitochondrial inner membrane protein OXA1-like (OXA1L), found in Arabidopsis thaliana (Mouse-ear cress).